The sequence spans 315 residues: Transposase for insertion sequence element IS640 (315 aa).

Residues 5 to 66 enclose the HTH IS21-type domain; sequence EDFYMIKQMR…PFMDYIDMRL (62 aa). The 175-residue stretch at 111–285 folds into the Integrase catalytic domain; that stretch reads FETQPGYQLQ…TPEQRSRWSR (175 aa).

Belongs to the transposase IS21/IS408/IS1162 family.

In terms of biological role, involved in the transposition of the insertion sequence. The sequence is that of Transposase for insertion sequence element IS640 (istA) from Shigella sonnei.